A 209-amino-acid chain; its full sequence is Ribosomal RNA large subunit methyltransferase E (209 aa).

Gly-63, Trp-65, Asp-83, Asp-99, and Asp-124 together coordinate S-adenosyl-L-methionine. Lys-164 serves as the catalytic Proton acceptor.

This sequence belongs to the class I-like SAM-binding methyltransferase superfamily. RNA methyltransferase RlmE family.

It is found in the cytoplasm. It catalyses the reaction uridine(2552) in 23S rRNA + S-adenosyl-L-methionine = 2'-O-methyluridine(2552) in 23S rRNA + S-adenosyl-L-homocysteine + H(+). In terms of biological role, specifically methylates the uridine in position 2552 of 23S rRNA at the 2'-O position of the ribose in the fully assembled 50S ribosomal subunit. The chain is Ribosomal RNA large subunit methyltransferase E from Shewanella oneidensis (strain ATCC 700550 / JCM 31522 / CIP 106686 / LMG 19005 / NCIMB 14063 / MR-1).